Consider the following 179-residue polypeptide: Transcriptional repressor NrdR (179 aa).

The segment at 3–34 is a zinc-finger region; the sequence is CPYCQHTNSRVLESRSSEGGQSIRRRRECLCC. The 91-residue stretch at 49–139 folds into the ATP-cone domain; the sequence is ITVIKHDGKK…VYGRFQGIKD (91 aa). Positions 160-179 are disordered; sequence KPANDDFSEQETPSTVMMPS. Residues 169–179 are compositionally biased toward polar residues; that stretch reads QETPSTVMMPS.

The protein belongs to the NrdR family. It depends on Zn(2+) as a cofactor.

In terms of biological role, negatively regulates transcription of bacterial ribonucleotide reductase nrd genes and operons by binding to NrdR-boxes. This Rippkaea orientalis (strain PCC 8801 / RF-1) (Cyanothece sp. (strain PCC 8801)) protein is Transcriptional repressor NrdR.